Reading from the N-terminus, the 316-residue chain is Pantothenate kinase (316 aa).

95–102 provides a ligand contact to ATP; that stretch reads GSVAVGKS.

The protein belongs to the prokaryotic pantothenate kinase family.

Its subcellular location is the cytoplasm. The enzyme catalyses (R)-pantothenate + ATP = (R)-4'-phosphopantothenate + ADP + H(+). It functions in the pathway cofactor biosynthesis; coenzyme A biosynthesis; CoA from (R)-pantothenate: step 1/5. The polypeptide is Pantothenate kinase (Klebsiella pneumoniae (strain 342)).